A 120-amino-acid polypeptide reads, in one-letter code: Large ribosomal subunit protein uL18 (120 aa).

This sequence belongs to the universal ribosomal protein uL18 family. Part of the 50S ribosomal subunit; part of the 5S rRNA/L5/L18/L25 subcomplex. Contacts the 5S and 23S rRNAs.

In terms of biological role, this is one of the proteins that bind and probably mediate the attachment of the 5S RNA into the large ribosomal subunit, where it forms part of the central protuberance. In Nitrobacter hamburgensis (strain DSM 10229 / NCIMB 13809 / X14), this protein is Large ribosomal subunit protein uL18.